Here is an 86-residue protein sequence, read N- to C-terminus: UPF0297 protein SERP1181 (86 aa).

The protein belongs to the UPF0297 family.

The chain is UPF0297 protein SERP1181 from Staphylococcus epidermidis (strain ATCC 35984 / DSM 28319 / BCRC 17069 / CCUG 31568 / BM 3577 / RP62A).